Reading from the N-terminus, the 624-residue chain is MATVLSRALKLPGKKSPDLGEYDPLTQADSDESEDDLVLNLQQKNGGVKNGKSALGDLPEPDSDADVAGAAKPHLSEVTPEGFPSEPLGGLEQKATSPLVSYVRTSVFLLTLVISMVLVLLCAFLIPCPPRDLHSAWSRRLGSQGGGDLSPLELADVNRDGLRDVLLTFVTTRNGTEGGVGSQPTADLVCLSGMNGSTLWSSPLPEEAQDVTCLDLIPGSVAKTICLVTGTRKMLSAFNATSGKVLWTLNPNHLSNGTLAAPVVVLPDLDEDGVRDLVVLAIGELQPDLCFLLVSGRTGSPVGRPVKYNIVGVGNLIGPQVYITASGAVYILFGFGNIQAVALRDIFVQAQNRDSSPPSLQIEEPEWEKHRSVNLSELIDVYSDGVELLQLVKAPDSNSSSLLITTRQGLVLLRGQDLTPHWKLNLQGLRSQPTPGYFTDDQTLDFLLQTQDGDGMKKMTVVDGGSGSIVWSYSIPCHMKETPTTSAITSDQKSVFLFWAEALTAASLSSDDSSGAEPPGLYHLYLLHPAFPSILLDLSNTTGIVTASEVGINDIWKDAFYVTRTTGMSPEGHPTSLVVSKLSLRWALMEGQMVQLKETTPKIGRGELRRFLSRIKFVDSPYQI.

Residues 1–91 (MATVLSRALK…GFPSEPLGGL (91 aa)) form a disordered region. Ser-16 carries the post-translational modification Phosphoserine. Thr-26 is subject to Phosphothreonine. A phosphoserine mark is found at Ser-30, Ser-33, and Ser-63. Residues 107 to 127 (VFLLTLVISMVLVLLCAFLIP) traverse the membrane as a helical segment.

Belongs to the FAM234 family.

The protein resides in the membrane. The protein localises to the golgi outpost. Its subcellular location is the cytoplasm. It localises to the cytoskeleton. It is found in the microtubule organizing center. The chain is Protein FAM234B from Mus musculus (Mouse).